Reading from the N-terminus, the 268-residue chain is Small ribosomal subunit protein uS10m (268 aa).

A mitochondrion-targeting transit peptide spans 1-64 (MIIRPVVRSL…RITTTTEAPK (64 aa)).

The protein belongs to the universal ribosomal protein uS10 family. In terms of assembly, component of the mitochondrial small ribosomal subunit (mt-SSU). Mature N.crassa 74S mitochondrial ribosomes consist of a small (37S) and a large (54S) subunit. The 37S small subunit contains a 16S ribosomal RNA (16S mt-rRNA) and 32 different proteins. The 54S large subunit contains a 23S rRNA (23S mt-rRNA) and 42 different proteins.

The protein resides in the mitochondrion. Functionally, component of the mitochondrial ribosome (mitoribosome), a dedicated translation machinery responsible for the synthesis of mitochondrial genome-encoded proteins, including at least some of the essential transmembrane subunits of the mitochondrial respiratory chain. The mitoribosomes are attached to the mitochondrial inner membrane and translation products are cotranslationally integrated into the membrane. The protein is Small ribosomal subunit protein uS10m (mrp-10) of Neurospora crassa (strain ATCC 24698 / 74-OR23-1A / CBS 708.71 / DSM 1257 / FGSC 987).